The primary structure comprises 227 residues: Octanoyltransferase (227 aa).

In terms of domain architecture, BPL/LPL catalytic spans 34–212; that stretch reads RQREDGLMLL…AFAEVFPVTW (179 aa). Residues 76–83, 143–145, and 156–158 each bind substrate; these read RGGEVTYH, AIA, and GFA. The active-site Acyl-thioester intermediate is Cys-174.

This sequence belongs to the LipB family.

It is found in the cytoplasm. The catalysed reaction is octanoyl-[ACP] + L-lysyl-[protein] = N(6)-octanoyl-L-lysyl-[protein] + holo-[ACP] + H(+). Its pathway is protein modification; protein lipoylation via endogenous pathway; protein N(6)-(lipoyl)lysine from octanoyl-[acyl-carrier-protein]: step 1/2. Functionally, catalyzes the transfer of endogenously produced octanoic acid from octanoyl-acyl-carrier-protein onto the lipoyl domains of lipoate-dependent enzymes. Lipoyl-ACP can also act as a substrate although octanoyl-ACP is likely to be the physiological substrate. This chain is Octanoyltransferase, found in Synechocystis sp. (strain ATCC 27184 / PCC 6803 / Kazusa).